A 318-amino-acid chain; its full sequence is MFVGRVGPVDRRSDGERSRRPREFEYIRYETIDDGRIAAITLDRPKQRNAQTRGMLVELGAAFELAEADDTVRVVILRAAGPAFSAGHDLGSADDIRERSPGPDQHPSYRCNGATFGGVESRNRQEWHYYFENTKRWRNLRKITIAQVHGAVLSAGLMLAWCCDLIVASEDTVFADVVGTRLGMCGVEYFGHPWEFGPRKTKELLLTGDCIGADEAHALGMVSKVFPADELATSTIEFARRIAKVPTMAALLIKESVNQTVDAMGFSAALDGCFKIHQLNHAHWGEVTGGKLSYGTVEYGLEDWRAAPQIRPAIKQRP.

Positions 90-110 (LGSADDIRERSPGPDQHPSYR) are disordered.

The protein belongs to the enoyl-CoA hydratase/isomerase family.

The chain is Putative enoyl-CoA hydratase EchA13 (echA13) from Mycobacterium tuberculosis (strain ATCC 25618 / H37Rv).